We begin with the raw amino-acid sequence, 362 residues long: Chorismate synthase (362 aa).

Residues Arg48 and Arg54 each coordinate NADP(+). FMN is bound by residues 125–127, 238–239, Gly278, 293–297, and Arg319; these read RSS, NA, and KPTSS.

It belongs to the chorismate synthase family. Homotetramer. FMNH2 serves as cofactor.

The enzyme catalyses 5-O-(1-carboxyvinyl)-3-phosphoshikimate = chorismate + phosphate. It participates in metabolic intermediate biosynthesis; chorismate biosynthesis; chorismate from D-erythrose 4-phosphate and phosphoenolpyruvate: step 7/7. Its function is as follows. Catalyzes the anti-1,4-elimination of the C-3 phosphate and the C-6 proR hydrogen from 5-enolpyruvylshikimate-3-phosphate (EPSP) to yield chorismate, which is the branch point compound that serves as the starting substrate for the three terminal pathways of aromatic amino acid biosynthesis. This reaction introduces a second double bond into the aromatic ring system. In Psychromonas ingrahamii (strain DSM 17664 / CCUG 51855 / 37), this protein is Chorismate synthase.